The primary structure comprises 511 residues: Apolipoprotein N-acyltransferase (511 aa).

The next 6 membrane-spanning stretches (helical) occupy residues 7 to 29, 58 to 78, 90 to 110, 125 to 145, 163 to 183, and 192 to 212; these read PGWP…LAPF, GWWY…VSIH, LLML…AWLW, LAFA…LTGF, VPVG…ALLV, and GASL…GLYL. The CN hydrolase domain occupies 230–470; sequence IQGNIAQELK…QGILRGEVIP (241 aa). Catalysis depends on Glu-269, which acts as the Proton acceptor. Residue Lys-330 is part of the active site. Catalysis depends on Cys-382, which acts as the Nucleophile. A helical transmembrane segment spans residues 482–502; the sequence is VWPLAGLAGVLLLWALLGRQL.

The protein belongs to the CN hydrolase family. Apolipoprotein N-acyltransferase subfamily.

The protein localises to the cell inner membrane. The enzyme catalyses N-terminal S-1,2-diacyl-sn-glyceryl-L-cysteinyl-[lipoprotein] + a glycerophospholipid = N-acyl-S-1,2-diacyl-sn-glyceryl-L-cysteinyl-[lipoprotein] + a 2-acyl-sn-glycero-3-phospholipid + H(+). Its pathway is protein modification; lipoprotein biosynthesis (N-acyl transfer). Functionally, catalyzes the phospholipid dependent N-acylation of the N-terminal cysteine of apolipoprotein, the last step in lipoprotein maturation. The chain is Apolipoprotein N-acyltransferase from Pseudomonas aeruginosa (strain ATCC 15692 / DSM 22644 / CIP 104116 / JCM 14847 / LMG 12228 / 1C / PRS 101 / PAO1).